A 391-amino-acid polypeptide reads, in one-letter code: Formate-dependent phosphoribosylglycinamide formyltransferase (391 aa).

N(1)-(5-phospho-beta-D-ribosyl)glycinamide contacts are provided by residues 20-21 (EL) and Glu-80. ATP contacts are provided by residues Arg-112, Lys-153, 158–163 (SSGKGQ), 193–196 (EGFV), and Glu-201. An ATP-grasp domain is found at 117–306 (RLAAETLGLP…EFALHVRAIL (190 aa)). 2 residues coordinate Mg(2+): Glu-265 and Glu-277. Residues Asp-284, Lys-354, and 361–362 (RR) each bind N(1)-(5-phospho-beta-D-ribosyl)glycinamide.

This sequence belongs to the PurK/PurT family. In terms of assembly, homodimer.

It catalyses the reaction N(1)-(5-phospho-beta-D-ribosyl)glycinamide + formate + ATP = N(2)-formyl-N(1)-(5-phospho-beta-D-ribosyl)glycinamide + ADP + phosphate + H(+). Its pathway is purine metabolism; IMP biosynthesis via de novo pathway; N(2)-formyl-N(1)-(5-phospho-D-ribosyl)glycinamide from N(1)-(5-phospho-D-ribosyl)glycinamide (formate route): step 1/1. In terms of biological role, involved in the de novo purine biosynthesis. Catalyzes the transfer of formate to 5-phospho-ribosyl-glycinamide (GAR), producing 5-phospho-ribosyl-N-formylglycinamide (FGAR). Formate is provided by PurU via hydrolysis of 10-formyl-tetrahydrofolate. In Shewanella sp. (strain W3-18-1), this protein is Formate-dependent phosphoribosylglycinamide formyltransferase.